The chain runs to 1035 residues: Electrogenic sodium bicarbonate cotransporter 1 (1035 aa).

The Cytoplasmic portion of the chain corresponds to 1-421 (MSSEKECLEN…FASDFYDALS (421 aa)). The segment covering 192–217 (SRLFSTPDNGSPTMTHRNLTSTSLND) has biased composition (polar residues). Disordered regions lie at residues 192 to 222 (SRLF…SDKP) and 348 to 389 (IEPP…GDSE). The segment covering 376 to 389 (APHDDGGGGHGDSE) has biased composition (basic and acidic residues). Residues 422-446 (IQSLSAILFIYLGTVTNAITFGGLL) form a helical membrane-spanning segment. The Extracellular segment spans residues 447–456 (GDATENMQGV). Residues 457-475 (LESFLGTAVSGAVFCLFGG) form a helical membrane-spanning segment. Q476 is a topological domain (cytoplasmic). A discontinuously helical membrane pass occupies residues 477–497 (PLTILSSTGPVLVFERLLFNF). At 498-505 (SKDNDFDY) the chain is on the extracellular side. A helical transmembrane segment spans residues 506–526 (LEFRLWIGLWSAFQCLILVAT). The Cytoplasmic segment spans residues 527-540 (DASFLVKYFTRFTE). A helical transmembrane segment spans residues 541–564 (EGFSSLISFIFIYDAFKKMIKLAD). The Extracellular portion of the chain corresponds to 565–648 (YYPINSHFKV…GSNCKYVPDI (84 aa)). 4 N-linked (GlcNAc...) asparagine glycosylation sites follow: N591, N596, N609, and N617. Residues 649–666 (TLMSFILFLGTYTCSMAL) traverse the membrane as a helical segment. At 667-681 (KKFKTSRYFPTTARK) the chain is on the cytoplasmic side. The chain crosses the membrane as a helical span at residues 682–701 (LISDFAIILSILIFCGLDAL). Residues 702 to 735 (LGVDTPKLIVPSEFKPTSPNRGWFVPPFGGNPWW) lie on the Extracellular side of the membrane. Residues 736 to 763 (VYLAAAIPALLVTILIFMDQQITGVIVN) traverse the membrane as a helical segment. The Cytoplasmic segment spans residues 764–775 (RKEHKLKKGAGY). A helical membrane pass occupies residues 776-792 (HLDLFWVAILMVVCSFM). A topological domain (extracellular) is located at residue A793. The chain crosses the membrane as a discontinuously helical span at residues 794–811 (LPWYVAATVISIAHIDSL). Over 812-833 (KMETETSAPGEQPKFLGVREQR) the chain is Cytoplasmic. A helical transmembrane segment spans residues 834–850 (VTGTVVFLLTGLSVFMA). The Extracellular segment spans residues 851-857 (PILKFIP). The helical transmembrane segment at 858–874 (MPVLYGVFLYMGVASLN) threads the bilayer. The Cytoplasmic segment spans residues 875–916 (GVQFMDRLKLLLMPPKYQPDFIYLRHVPLRRVHLFTFLQVVC). Positions 917–942 (LAMLWILKSTVAAIIFPVMILALVAV) form an intramembrane region, discontinuously helical. At 943 to 1035 (RKAMDYFFSQ…PTFLERHTSC (93 aa)) the chain is on the cytoplasmic side. A disordered region spans residues 968–1035 (KKKEDEKKKK…PTFLERHTSC (68 aa)). Basic and acidic residues predominate over residues 1007 to 1035 (IMEKEPFLIDSKPSDRENSPTFLERHTSC).

The protein belongs to the anion exchanger (TC 2.A.31) family. Homodimer. In terms of tissue distribution, expressed in kidney and to a lower extent in bladder, brain, intestine, large intestine and eye.

It localises to the basolateral cell membrane. The protein localises to the cell membrane. It catalyses the reaction 2 hydrogencarbonate(out) + Na(+)(out) = 2 hydrogencarbonate(in) + Na(+)(in). The enzyme catalyses 3 hydrogencarbonate(out) + Na(+)(out) = 3 hydrogencarbonate(in) + Na(+)(in). In terms of biological role, electrogenic sodium/bicarbonate cotransporter with a Na(+):HCO3(-) stoichiometry varying from 1:2 to 1:3. May regulate bicarbonate influx/efflux at the basolateral membrane of cells and regulate intracellular pH. The polypeptide is Electrogenic sodium bicarbonate cotransporter 1 (SLC4A4) (Ambystoma tigrinum (Eastern tiger salamander)).